Consider the following 215-residue polypeptide: Probable transaldolase 1 (215 aa).

Lys-83 acts as the Schiff-base intermediate with substrate in catalysis.

Belongs to the transaldolase family. Type 3B subfamily.

Its subcellular location is the cytoplasm. It carries out the reaction D-sedoheptulose 7-phosphate + D-glyceraldehyde 3-phosphate = D-erythrose 4-phosphate + beta-D-fructose 6-phosphate. It participates in carbohydrate degradation; pentose phosphate pathway; D-glyceraldehyde 3-phosphate and beta-D-fructose 6-phosphate from D-ribose 5-phosphate and D-xylulose 5-phosphate (non-oxidative stage): step 2/3. Its function is as follows. Transaldolase is important for the balance of metabolites in the pentose-phosphate pathway. This chain is Probable transaldolase 1, found in Bacillus cereus (strain ATCC 14579 / DSM 31 / CCUG 7414 / JCM 2152 / NBRC 15305 / NCIMB 9373 / NCTC 2599 / NRRL B-3711).